Here is a 270-residue protein sequence, read N- to C-terminus: MNFNYFILVLFFITSGHAKSETREVHQEAENHIKRGSNTGFNFKTLDKEKRSAEEQNLAEHLVTRGSNKGFNFMVDMINALSNGKRSAEEQDLAEDLVTRGSNKGFNFMVDMIQALSKGKRSAEDQDLAEDLVTRGSNKGFNFMVDMIQALSNGKRSAEEQDLAEHLVTRGSNKGFNFMVDMINALSNGKRSAEEQDLVEDLVTRRSNKGFNFMVDMIQALSKGKRSAEEQDLAEDLVTRGSNKGFNFMVDMIQALSKGKRSAEQEKDMK.

The N-terminal stretch at 1–18 (MNFNYFILVLFFITSGHA) is a signal peptide. 2 consecutive propeptides follow at residues 19–35 (KSET…HIKR) and 52–65 (SAEE…LVTR). Position 83 is an asparagine amide (Asn-83). Residues 87–100 (SAEEQDLAEDLVTR) constitute a propeptide that is removed on maturation. Residue Lys-118 is modified to Lysine amide. A propeptide spanning residues 122 to 135 (SAEDQDLAEDLVTR) is cleaved from the precursor. Position 153 is an asparagine amide (Asn-153). A propeptide spanning residues 157 to 170 (SAEEQDLAEHLVTR) is cleaved from the precursor. Residue Asn-188 is modified to Asparagine amide. The propeptide occupies 192–205 (SAEEQDLVEDLVTR). Position 223 is a lysine amide (Lys-223). A propeptide spanning residues 227 to 240 (SAEEQDLAEDLVTR) is cleaved from the precursor. Residue Lys-258 is modified to Lysine amide. Residues 262–270 (SAEQEKDMK) constitute a propeptide that is removed on maturation.

The protein belongs to the maximin-S family. In terms of tissue distribution, expressed by the skin dorsal glands.

It is found in the secreted. Functionally, maximin-S1 has no antimicrobial activity. Has no hemolytic activity. Maximin-S2 has an activity against mycoplasma but has no activity against common Gram-positive and Gram-negative bacteria nor fungi. Has no hemolytic activity. In terms of biological role, maximin-S3 has an activity against mycoplasma but has no activity against common Gram-positive and Gram-negative bacteria nor fungi. Has no hemolytic activity. Its function is as follows. Maximin-S4 has an activity against mycoplasma but has no activity against common Gram-positive and Gram-negative bacteria nor fungi. Has no hemolytic activity. Functionally, maximin-S5 has an activity against mycoplasma but has no activity against common Gram-positive and Gram-negative bacteria nor fungi. Has no hemolytic activity. The polypeptide is Maximins-S type D (Bombina maxima (Giant fire-bellied toad)).